A 612-amino-acid polypeptide reads, in one-letter code: Chaperone protein DnaK (612 aa).

Phosphothreonine; by autocatalysis is present on T174. The tract at residues 578–612 is disordered; that stretch reads GGQTGGATNTDSAGQGTTQDNVYEANYKVEDDDNK. The segment covering 586–598 has biased composition (polar residues); sequence NTDSAGQGTTQDN.

It belongs to the heat shock protein 70 family.

In terms of biological role, acts as a chaperone. The protein is Chaperone protein DnaK of Thermoanaerobacter sp. (strain X514).